The primary structure comprises 264 residues: Ribosomal protein L11 methyltransferase (264 aa).

Residues Thr-116, Gly-137, Asp-159, and Asn-200 each coordinate S-adenosyl-L-methionine.

The protein belongs to the methyltransferase superfamily. PrmA family.

It localises to the cytoplasm. It carries out the reaction L-lysyl-[protein] + 3 S-adenosyl-L-methionine = N(6),N(6),N(6)-trimethyl-L-lysyl-[protein] + 3 S-adenosyl-L-homocysteine + 3 H(+). In terms of biological role, methylates ribosomal protein L11. The polypeptide is Ribosomal protein L11 methyltransferase (Thermotoga neapolitana (strain ATCC 49049 / DSM 4359 / NBRC 107923 / NS-E)).